Reading from the N-terminus, the 363-residue chain is Putative lipoate-protein ligase A (363 aa).

A BPL/LPL catalytic domain is found at 49 to 229 (STAKHCLLLY…CFLLHKSHST (181 aa)). Residues Arg91, 96–99 (GTVF), and Lys152 each bind ATP. Lys152 provides a ligand contact to (R)-lipoate.

Belongs to the LplA family. Monomer.

The protein localises to the cytoplasm. It carries out the reaction L-lysyl-[lipoyl-carrier protein] + (R)-lipoate + ATP = N(6)-[(R)-lipoyl]-L-lysyl-[lipoyl-carrier protein] + AMP + diphosphate + H(+). It participates in protein modification; protein lipoylation via exogenous pathway; protein N(6)-(lipoyl)lysine from lipoate: step 1/2. Its pathway is protein modification; protein lipoylation via exogenous pathway; protein N(6)-(lipoyl)lysine from lipoate: step 2/2. Functionally, catalyzes both the ATP-dependent activation of exogenously supplied lipoate to lipoyl-AMP and the transfer of the activated lipoyl onto the lipoyl domains of lipoate-dependent enzymes. The protein is Putative lipoate-protein ligase A (aim22) of Schizosaccharomyces pombe (strain 972 / ATCC 24843) (Fission yeast).